Here is a 288-residue protein sequence, read N- to C-terminus: Protoheme IX farnesyltransferase (288 aa).

9 consecutive transmembrane segments (helical) span residues 8–28 (IIKP…FLLA), 35–55 (VNLF…ASIF), 75–95 (IAIG…LLIL), 105–125 (FLTI…YSLL), 130–150 (SVYS…IGYC), 161–181 (FILL…IGLV), 205–225 (INII…FFAG), 230–250 (NYLF…IKGF), and 265–285 (IFLF…IDYK).

This sequence belongs to the UbiA prenyltransferase family. Protoheme IX farnesyltransferase subfamily.

Its subcellular location is the cell membrane. It carries out the reaction heme b + (2E,6E)-farnesyl diphosphate + H2O = Fe(II)-heme o + diphosphate. The protein operates within porphyrin-containing compound metabolism; heme O biosynthesis; heme O from protoheme: step 1/1. Its function is as follows. Converts heme B (protoheme IX) to heme O by substitution of the vinyl group on carbon 2 of heme B porphyrin ring with a hydroxyethyl farnesyl side group. The polypeptide is Protoheme IX farnesyltransferase (Wigglesworthia glossinidia brevipalpis).